The chain runs to 195 residues: Interferon omega-2 (195 aa).

Residues 1–23 (MALLPSLLTALVVYELWPCGALG) form the signal peptide. 2 disulfide bridges follow: C24–C122 and C52–C162. A glycan (N-linked (GlcNAc...) asparagine) is linked at N101.

It belongs to the alpha/beta interferon family.

Its subcellular location is the secreted. This Equus caballus (Horse) protein is Interferon omega-2.